We begin with the raw amino-acid sequence, 372 residues long: Glutamate 5-kinase (372 aa).

ATP is bound at residue lysine 14. Substrate-binding residues include serine 54, aspartate 141, and asparagine 153. Residue 173–174 participates in ATP binding; that stretch reads TD. The PUA domain maps to 280 to 358; the sequence is RGTLVLDDGA…EAIVRELGYM (79 aa).

It belongs to the glutamate 5-kinase family.

It localises to the cytoplasm. It catalyses the reaction L-glutamate + ATP = L-glutamyl 5-phosphate + ADP. It participates in amino-acid biosynthesis; L-proline biosynthesis; L-glutamate 5-semialdehyde from L-glutamate: step 1/2. Its function is as follows. Catalyzes the transfer of a phosphate group to glutamate to form L-glutamate 5-phosphate. In Pseudomonas syringae pv. tomato (strain ATCC BAA-871 / DC3000), this protein is Glutamate 5-kinase.